The sequence spans 361 residues: Lipoyl synthase 1, chloroplastic (361 aa).

The [4Fe-4S] cluster site is built by C87, C92, C98, C124, C128, C131, and S339. Residues 107-328 (GEGDGIATAT…KEYGESVGFR (222 aa)) form the Radical SAM core domain.

The protein belongs to the radical SAM superfamily. Lipoyl synthase family. It depends on [4Fe-4S] cluster as a cofactor.

Its subcellular location is the plastid. The protein localises to the chloroplast. It catalyses the reaction [[Fe-S] cluster scaffold protein carrying a second [4Fe-4S](2+) cluster] + N(6)-octanoyl-L-lysyl-[protein] + 2 oxidized [2Fe-2S]-[ferredoxin] + 2 S-adenosyl-L-methionine + 4 H(+) = [[Fe-S] cluster scaffold protein] + N(6)-[(R)-dihydrolipoyl]-L-lysyl-[protein] + 4 Fe(3+) + 2 hydrogen sulfide + 2 5'-deoxyadenosine + 2 L-methionine + 2 reduced [2Fe-2S]-[ferredoxin]. The protein operates within protein modification; protein lipoylation via endogenous pathway; protein N(6)-(lipoyl)lysine from octanoyl-[acyl-carrier-protein]: step 2/2. In terms of biological role, catalyzes the radical-mediated insertion of two sulfur atoms into the C-6 and C-8 positions of the octanoyl moiety bound to the lipoyl domains of lipoate-dependent enzymes, thereby converting the octanoylated domains into lipoylated derivatives. This chain is Lipoyl synthase 1, chloroplastic, found in Zea mays (Maize).